A 975-amino-acid chain; its full sequence is E3 ubiquitin-protein ligase NEDD4-like (975 aa).

Position 2 is an N-acetylalanine (alanine 2). The 123-residue stretch at 4-126 (GLGEPVYGLS…TEDPTMERPY (123 aa)) folds into the C2 domain. Disordered regions lie at residues 178–202 (DSND…WEEK), 244–272 (AAHR…VPEP), and 285–312 (DSLG…EELS). Residues 193–226 (PPLPPGWEEKVDNLGRTYYVNHNNRTTQWHRPSL) form the WW 1 domain. Serine 312 is modified (phosphoserine). A Phosphothreonine modification is found at threonine 318. Residue serine 342 is modified to Phosphoserine; by WNK1 and WNK4. Disordered regions lie at residues 349 to 393 (EQGH…GWEE) and 424 to 496 (GASG…KVTQ). Residue threonine 367 is modified to Phosphothreonine; by SGK1. The WW 2 domain maps to 385 to 418 (PGLPSGWEERKDAKGRTYYVNHNNRTTTWTRPIM). Serine 446 carries the phosphoserine modification. The residue at position 448 (serine 448) is a Phosphoserine; by PKA and SGK1. The residue at position 449 (serine 449) is a Phosphoserine; by WNK1 and WNK4. Over residues 460–471 (GAKDSPVRRAVK) the composition is skewed to basic and acidic residues. Residues serine 464, serine 475, serine 479, serine 483, and serine 487 each carry the phosphoserine modification. 2 WW domains span residues 497–530 (SFLP…DPRL) and 548–581 (GPLP…DPRL). An HECT domain is found at 640–974 (RPDVLKARLW…VENAQGFEGV (335 aa)). The Glycyl thioester intermediate role is filled by cysteine 942.

In terms of assembly, interacts with UBE2E3. Interacts with NDFIP1; this interaction activates the E3 ubiquitin-protein ligase. Interacts with NDFIP2; this interaction activates the E3 ubiquitin-protein ligase. Interacts (via WW domains) with SCN1A. Interacts (via WW domains) with SCN2A. Interacts (via WW domains) with SCN3A. Interacts (via WW domains) with SCN5A. Interacts (via WW domains) with SCN8A. Interacts (via WW domains) with SCN9A. Interacts (via WW domains) with SCN10A. Interacts (via WW domains) with CLCN5. Interacts with SMAD2. Interacts with SMAD3. Interacts with SMAD6. Interacts with SMAD7. The phosphorylated form interacts with 14-3-3 proteins. Interacts with TNK2. Interacts with WNK1. Interacts with SGK1. Interacts (via C2 domain) with NPC2. Interacts with ARRDC4. Interacts with KCNQ1; promotes internalization of KCNQ1. Interacts (via domains WW1, 3 and 4) with USP36; the interaction inhibits ubiquitination of, at least, NTRK1, KCNQ2 and KCNQ3 by NEDD4L. Interacts with PRRG4 (via cytoplasmic domain). Interacts with LDLRAD3; the interaction is direct. Interacts with UBE2D2. Interacts with TTYH2 and TTYH3. (Microbial infection) Interacts with Epstein-Barr virus LMP2A. Post-translationally, phosphorylated by SGK1 or PKA; which impairs interaction with SCNN. Interaction with YWHAH inhibits dephosphorylation. Auto-ubiquitinated. Deubiquitinated by USP36, no effect on NEDD4L protein levels. Both proteins interact and regulate each other's ubiquitination levels. As to expression, ubiquitously expressed, with highest levels in prostate, pancreas, and kidney. Expressed in melanocytes.

The protein localises to the cytoplasm. It is found in the golgi apparatus. Its subcellular location is the endosome. The protein resides in the multivesicular body. It carries out the reaction S-ubiquitinyl-[E2 ubiquitin-conjugating enzyme]-L-cysteine + [acceptor protein]-L-lysine = [E2 ubiquitin-conjugating enzyme]-L-cysteine + N(6)-ubiquitinyl-[acceptor protein]-L-lysine.. The enzyme catalyses [E2 ubiquitin-conjugating enzyme]-S-ubiquitinyl-L-cysteine + [acceptor protein]-L-cysteine = [E2 ubiquitin-conjugating enzyme]-L-cysteine + [acceptor protein]-S-ubiquitinyl-L-cysteine.. The protein operates within protein modification; protein ubiquitination. Activated by NDFIP1- and NDFIP2-binding. E3 ubiquitin-protein ligase that mediates the polyubiquitination of lysine and cysteine residues on target proteins and is thereby implicated in the regulation of various signaling pathways including autophagy, innate immunity or DNA repair. Inhibits TGF-beta signaling by triggering SMAD2 and TGFBR1 ubiquitination and proteasome-dependent degradation. Downregulates autophagy and cell growth by ubiquitinating and reducing cellular ULK1 or ASCT2 levels. Promotes ubiquitination and internalization of various plasma membrane channels such as ENaC, SCN2A/Nav1.2, SCN3A/Nav1.3, SCN5A/Nav1.5, SCN9A/Nav1.7, SCN10A/Nav1.8, KCNA3/Kv1.3, KCNH2, EAAT1, KCNQ2/Kv7.2, KCNQ3/Kv7.3 or CLC5. Promotes ubiquitination and degradation of SGK1 and TNK2. Ubiquitinates BRAT1 and this ubiquitination is enhanced in the presence of NDFIP1. Plays a role in dendrite formation by melanocytes. Involved in the regulation of TOR signaling. Ubiquitinates and regulates protein levels of NTRK1 once this one is activated by NGF. Plays a role in antiviral innate immunity by catalyzing 'Lys-29'-linked cysteine ubiquitination of TRAF3, resulting in enhanced 'Lys-48' and 'Lys-63'-linked ubiquitination of TRAF3. Ubiquitinates TTYH2 and TTYH3 and regulates protein levels of TTYH2. The sequence is that of E3 ubiquitin-protein ligase NEDD4-like from Homo sapiens (Human).